Here is a 314-residue protein sequence, read N- to C-terminus: uncharacterized protein (314 aa).

Positions 1–18 (MKVSLLIFLIILVGVIKS) are cleaved as a signal peptide. N-linked (GlcNAc...) asparagine glycans are attached at residues asparagine 43, asparagine 96, asparagine 109, asparagine 116, asparagine 117, and asparagine 161. The tract at residues 252-314 (SMRITKNNPH…PKSIDFHHLF (63 aa)) is disordered. 2 stretches are compositionally biased toward low complexity: residues 257 to 268 (KNNPHLNNNNNN) and 285 to 296 (KTTTKTSTKTTS).

It localises to the secreted. This is an uncharacterized protein from Dictyostelium discoideum (Social amoeba).